The following is a 345-amino-acid chain: Carbamoyl phosphate synthase small chain (345 aa).

Residues Met-1–Val-169 form a CPSase region. L-glutamine is bound by residues Ser-45, Gly-213, and Gly-215. Residues Thr-168–Ala-345 form the Glutamine amidotransferase type-1 domain. The Nucleophile role is filled by Cys-242. L-glutamine-binding residues include Phe-243, Gln-246, Asn-282, Gly-284, and Tyr-285. Residues His-321 and Glu-323 contribute to the active site.

This sequence belongs to the CarA family. In terms of assembly, composed of two chains; the small (or glutamine) chain promotes the hydrolysis of glutamine to ammonia, which is used by the large (or ammonia) chain to synthesize carbamoyl phosphate. Tetramer of heterodimers (alpha,beta)4.

It catalyses the reaction hydrogencarbonate + L-glutamine + 2 ATP + H2O = carbamoyl phosphate + L-glutamate + 2 ADP + phosphate + 2 H(+). It carries out the reaction L-glutamine + H2O = L-glutamate + NH4(+). It functions in the pathway amino-acid biosynthesis; L-arginine biosynthesis; carbamoyl phosphate from bicarbonate: step 1/1. The protein operates within pyrimidine metabolism; UMP biosynthesis via de novo pathway; (S)-dihydroorotate from bicarbonate: step 1/3. Small subunit of the glutamine-dependent carbamoyl phosphate synthetase (CPSase). CPSase catalyzes the formation of carbamoyl phosphate from the ammonia moiety of glutamine, carbonate, and phosphate donated by ATP, constituting the first step of 2 biosynthetic pathways, one leading to arginine and/or urea and the other to pyrimidine nucleotides. The small subunit (glutamine amidotransferase) binds and cleaves glutamine to supply the large subunit with the substrate ammonia. The polypeptide is Carbamoyl phosphate synthase small chain (Thermoplasma volcanium (strain ATCC 51530 / DSM 4299 / JCM 9571 / NBRC 15438 / GSS1)).